The chain runs to 322 residues: 4-hydroxythreonine-4-phosphate dehydrogenase (322 aa).

Thr-132 is a substrate binding site. A divalent metal cation contacts are provided by His-160, His-205, and His-260. Positions 268, 277, and 286 each coordinate substrate.

It belongs to the PdxA family. Homodimer. The cofactor is Zn(2+). Mg(2+) serves as cofactor. Requires Co(2+) as cofactor.

The protein resides in the cytoplasm. It carries out the reaction 4-(phosphooxy)-L-threonine + NAD(+) = 3-amino-2-oxopropyl phosphate + CO2 + NADH. Its pathway is cofactor biosynthesis; pyridoxine 5'-phosphate biosynthesis; pyridoxine 5'-phosphate from D-erythrose 4-phosphate: step 4/5. Its function is as follows. Catalyzes the NAD(P)-dependent oxidation of 4-(phosphooxy)-L-threonine (HTP) into 2-amino-3-oxo-4-(phosphooxy)butyric acid which spontaneously decarboxylates to form 3-amino-2-oxopropyl phosphate (AHAP). The sequence is that of 4-hydroxythreonine-4-phosphate dehydrogenase from Xanthomonas campestris pv. campestris (strain 8004).